Reading from the N-terminus, the 171-residue chain is N5-carboxyaminoimidazole ribonucleotide mutase (171 aa).

Residues Ser13, Asp16, and Arg43 each coordinate substrate.

The protein belongs to the AIR carboxylase family. Class I subfamily.

The catalysed reaction is 5-carboxyamino-1-(5-phospho-D-ribosyl)imidazole + H(+) = 5-amino-1-(5-phospho-D-ribosyl)imidazole-4-carboxylate. Its pathway is purine metabolism; IMP biosynthesis via de novo pathway; 5-amino-1-(5-phospho-D-ribosyl)imidazole-4-carboxylate from 5-amino-1-(5-phospho-D-ribosyl)imidazole (N5-CAIR route): step 2/2. Functionally, catalyzes the conversion of N5-carboxyaminoimidazole ribonucleotide (N5-CAIR) to 4-carboxy-5-aminoimidazole ribonucleotide (CAIR). This chain is N5-carboxyaminoimidazole ribonucleotide mutase, found in Mycobacterium leprae (strain TN).